The sequence spans 163 residues: uncharacterized protein (163 aa).

A coiled-coil region spans residues 101–162 (LESMKVERKP…KMGERILERE (62 aa)).

This is an uncharacterized protein from Aquifex aeolicus (strain VF5).